We begin with the raw amino-acid sequence, 198 residues long: V-type proton ATPase subunit E (198 aa).

Belongs to the V-ATPase E subunit family.

In terms of biological role, produces ATP from ADP in the presence of a proton gradient across the membrane. The chain is V-type proton ATPase subunit E from Borrelia hermsii (strain HS1 / DAH).